The primary structure comprises 451 residues: Probable NADH dehydrogenase (451 aa).

Lysine 41–arginine 71 contributes to the FAD binding site. Position 199–236 (leucine 199–glutamate 236) interacts with NAD(+).

This sequence belongs to the NADH dehydrogenase family. Requires FAD as cofactor.

It carries out the reaction a ubiquinone + NADH + 5 H(+)(in) = a ubiquinol + NAD(+) + 4 H(+)(out). The chain is Probable NADH dehydrogenase from Dictyostelium discoideum (Social amoeba).